The primary structure comprises 1274 residues: Mediator of RNA polymerase II transcription subunit 14 (1274 aa).

Disordered regions lie at residues 1 to 40 (MENGHMNGVRTHHDRNSWTNGVNGGVAKREGSPDKGKAHA), 1056 to 1142 (LVGT…LHTQ), and 1155 to 1274 (AQRQ…VVID). The span at 27-37 (AKREGSPDKGK) shows a compositional bias: basic and acidic residues. The span at 1075 to 1085 (QDLQQGPQKTP) shows a compositional bias: polar residues. A compositionally biased stretch (low complexity) spans 1090–1104 (AAQAAQAAQAAQAAQ). Residues 1108 to 1119 (PQRPKQQPPTPS) are compositionally biased toward pro residues. Composition is skewed to low complexity over residues 1120 to 1142 (QPQQQHRNVNQPQAQAQPQLHTQ), 1155 to 1172 (AQRQAQARANNSSNNNNT), and 1183 to 1252 (PQQR…PQGQ). Over residues 1253–1265 (PGHGGGANGGMGG) the composition is skewed to gly residues.

This sequence belongs to the Mediator complex subunit 14 family. In terms of assembly, component of the Mediator complex.

It localises to the nucleus. Component of the Mediator complex, a coactivator involved in the regulated transcription of nearly all RNA polymerase II-dependent genes. Mediator functions as a bridge to convey information from gene-specific regulatory proteins to the basal RNA polymerase II transcription machinery. Mediator is recruited to promoters by direct interactions with regulatory proteins and serves as a scaffold for the assembly of a functional preinitiation complex with RNA polymerase II and the general transcription factors. The sequence is that of Mediator of RNA polymerase II transcription subunit 14 (rgr1) from Neurospora crassa (strain ATCC 24698 / 74-OR23-1A / CBS 708.71 / DSM 1257 / FGSC 987).